The sequence spans 437 residues: Trigger factor (437 aa).

Residues 161–246 form the PPIase FKBP-type domain; the sequence is DDQVNIDFVG…VNSVSAPVLP (86 aa).

Belongs to the FKBP-type PPIase family. Tig subfamily.

The protein localises to the cytoplasm. It catalyses the reaction [protein]-peptidylproline (omega=180) = [protein]-peptidylproline (omega=0). Involved in protein export. Acts as a chaperone by maintaining the newly synthesized protein in an open conformation. Functions as a peptidyl-prolyl cis-trans isomerase. In Pseudomonas putida (strain ATCC 700007 / DSM 6899 / JCM 31910 / BCRC 17059 / LMG 24140 / F1), this protein is Trigger factor.